We begin with the raw amino-acid sequence, 377 residues long: S-adenosylmethionine decarboxylase proenzyme 2 (377 aa).

Active-site residues include Glu-24 and Glu-27. The active-site Schiff-base intermediate with substrate; via pyruvic acid is Ser-84. Residue Ser-84 is modified to Pyruvic acid (Ser); by autocatalysis. Cys-98 serves as the catalytic Proton donor; for catalytic activity. Active-site proton acceptor; for processing activity residues include Ser-246 and His-259.

The protein belongs to the eukaryotic AdoMetDC family. Requires pyruvate as cofactor. In terms of processing, is synthesized initially as an inactive proenzyme. Formation of the active enzyme involves a self-maturation process in which the active site pyruvoyl group is generated from an internal serine residue via an autocatalytic post-translational modification. Two non-identical subunits are generated from the proenzyme in this reaction, and the pyruvate is formed at the N-terminus of the alpha chain, which is derived from the carboxyl end of the proenzyme. The post-translation cleavage follows an unusual pathway, termed non-hydrolytic serinolysis, in which the side chain hydroxyl group of the serine supplies its oxygen atom to form the C-terminus of the beta chain, while the remainder of the serine residue undergoes an oxidative deamination to produce ammonia and the pyruvoyl group blocking the N-terminus of the alpha chain.

It catalyses the reaction S-adenosyl-L-methionine + H(+) = S-adenosyl 3-(methylsulfanyl)propylamine + CO2. It functions in the pathway amine and polyamine biosynthesis; S-adenosylmethioninamine biosynthesis; S-adenosylmethioninamine from S-adenosyl-L-methionine: step 1/1. This is S-adenosylmethionine decarboxylase proenzyme 2 (SAMDC2) from Dianthus caryophyllus (Carnation).